A 1550-amino-acid polypeptide reads, in one-letter code: DNA excision repair protein ERCC-6-like 2 (1550 aa).

A disordered region spans residues 1–23; sequence MDPSAPQPRAETSGKDIWHPGER. Residues 12-22 show a composition bias toward basic and acidic residues; that stretch reads TSGKDIWHPGE. In terms of domain architecture, Helicase ATP-binding spans 135–321; it reads YGHYIHGGGC…WCVMDWAVPG (187 aa). Position 148-155 (148-155) interacts with ATP; the sequence is DDMGLGKT. The DEAH box motif lies at 272-275; the sequence is DEAH. Residues 512–662 enclose the Helicase C-terminal domain; that stretch reads VLQQLLNHCR…CVVVGSENAK (151 aa). Positions 785 to 796 match the Atypical PIP-box motif; it reads PGQLTLLQCGFS. Disordered stretches follow at residues 808–848, 914–1002, and 1354–1410; these read DSDG…TSKH, FPDN…SSLR, and AETK…TRTG. 2 stretches are compositionally biased toward basic and acidic residues: residues 830–840 and 933–953; these read EAKDAGCEKNQ and TEHTVKTRNNDNSRNTDDKRN. Phosphoserine occurs at positions 980 and 983. Residues 992 to 1002 show a composition bias toward basic residues; that stretch reads SRVRKRASSLR. Over residues 1359 to 1388 the composition is skewed to polar residues; the sequence is SPVSSTQEIDSGKNSQASEDTVTSRSLNSE. Phosphoserine occurs at positions 1373 and 1376. The span at 1389–1405 shows a compositional bias: basic and acidic residues; sequence SETRERRLENTMKDQQD.

Belongs to the SNF2/RAD54 helicase family. Interacts with NEK6. Interacts (via an atypical PIP-box) with PCNA; this interaction facilitates cenrtomeric localization of ERCC6L2. Interacts with CYREN; this interaction is DNA independent. Interacts with XRCC6 and XRCC5. In terms of processing, phosphorylated by NEK6. As to expression, expressed in bone marrow (at protein level).

It localises to the nucleus. It is found in the cytoplasm. The protein localises to the cytoskeleton. Its subcellular location is the microtubule organizing center. The protein resides in the centrosome. It localises to the mitochondrion. It is found in the chromosome. The protein localises to the centromere. Functionally, promotes double-strand break (DSB) end-joining and facilitates programmed recombination by controlling how DNA ends are joined in a spatially oriented manner during repair. Also plays a role in DNA repair by restricting DNA end resection in double strand break (DSB) repair. Facilitates replication of complex DNA regions and regulates the maintenance of chromatin structure. The protein is DNA excision repair protein ERCC-6-like 2 of Homo sapiens (Human).